The sequence spans 341 residues: tRNA dimethylallyltransferase (341 aa).

Glycine 15–threonine 22 is an ATP binding site. Threonine 17–threonine 22 contacts substrate. 4 interaction with substrate tRNA regions span residues aspartate 44–leucine 47, glutamine 168–arginine 172, arginine 253–arginine 258, and lysine 302–arginine 309.

This sequence belongs to the IPP transferase family. In terms of assembly, monomer. Mg(2+) serves as cofactor.

The enzyme catalyses adenosine(37) in tRNA + dimethylallyl diphosphate = N(6)-dimethylallyladenosine(37) in tRNA + diphosphate. Catalyzes the transfer of a dimethylallyl group onto the adenine at position 37 in tRNAs that read codons beginning with uridine, leading to the formation of N6-(dimethylallyl)adenosine (i(6)A). In Verminephrobacter eiseniae (strain EF01-2), this protein is tRNA dimethylallyltransferase.